The sequence spans 84 residues: Sulfur carrier protein TusA (84 aa).

Residue cysteine 21 is the Cysteine persulfide intermediate of the active site.

This sequence belongs to the sulfur carrier protein TusA family.

Its subcellular location is the cytoplasm. Sulfur carrier protein which probably makes part of a sulfur-relay system. The protein is Sulfur carrier protein TusA of Pseudomonas savastanoi pv. phaseolicola (strain 1448A / Race 6) (Pseudomonas syringae pv. phaseolicola (strain 1448A / Race 6)).